Here is a 343-residue protein sequence, read N- to C-terminus: Cytoplasmic tRNA 2-thiolation protein 1 (343 aa).

The protein belongs to the TtcA family. CTU1/NCS6/ATPBD3 subfamily.

The protein localises to the cytoplasm. The protein operates within tRNA modification; 5-methoxycarbonylmethyl-2-thiouridine-tRNA biosynthesis. Plays a central role in 2-thiolation of mcm(5)S(2)U at tRNA wobble positions of tRNA(Lys), tRNA(Glu) and tRNA(Gln). Directly binds tRNAs and probably acts by catalyzing adenylation of tRNAs, an intermediate required for 2-thiolation. It is unclear whether it acts as a sulfurtransferase that transfers sulfur from thiocarboxylated URM1 onto the uridine of tRNAs at wobble position. In Drosophila pseudoobscura pseudoobscura (Fruit fly), this protein is Cytoplasmic tRNA 2-thiolation protein 1.